We begin with the raw amino-acid sequence, 978 residues long: Calsyntenin-1 (978 aa).

The first 26 residues, 1–26 (MTFHKTFGYGCIVLICFELLFAGVET), serve as a signal peptide directing secretion. The Extracellular portion of the chain corresponds to 27–876 (SSENDDEYLT…SFIHKAEGSH (850 aa)). Cadherin domains lie at 37–143 (QKEI…APTF) and 144–249 (LEPS…MPER). Residue N53 is glycosylated (N-linked (GlcNAc...) asparagine). 4 N-linked (GlcNAc...) asparagine glycosylation sites follow: N304, N486, N608, and N823. Residues 877 to 897 (VTMLIILVSVFLAVLLCGVSI) traverse the membrane as a helical segment. Over 898–978 (ARLKNNQKYI…EWDNSNIFQQ (81 aa)) the chain is Cytoplasmic. The segment at 937 to 958 (ADVTSDASSESENSESEDEEAL) is disordered. Residues 948 to 957 (ENSESEDEEA) show a composition bias toward acidic residues.

This sequence belongs to the calsyntenin family.

The protein resides in the postsynaptic cell membrane. Its function is as follows. Postsynaptic adhesion molecule that binds to presynaptic neurexins to mediate both excitatory and inhibitory synapse formation. Promotes synapse development by acting as a cell adhesion molecule at the postsynaptic membrane, which associates with neurexin-alpha at the presynaptic membrane. The polypeptide is Calsyntenin-1 (Cals) (Drosophila melanogaster (Fruit fly)).